We begin with the raw amino-acid sequence, 208 residues long: Putative thymidylate kinase (208 aa).

The defective ATP-binding stretch occupies residues 8–15; the sequence is GIDGSGVS.

Belongs to the thymidylate kinase family.

It catalyses the reaction dTMP + ATP = dTDP + ADP. The protein is Putative thymidylate kinase (tmk) of Aeropyrum pernix (strain ATCC 700893 / DSM 11879 / JCM 9820 / NBRC 100138 / K1).